We begin with the raw amino-acid sequence, 565 residues long: Sulfite reductase [NADPH] hemoprotein beta-component (565 aa).

Positions 429, 435, 474, and 478 each coordinate [4Fe-4S] cluster. A siroheme-binding site is contributed by C478.

Belongs to the nitrite and sulfite reductase 4Fe-4S domain family. As to quaternary structure, alpha(8)-beta(8). The alpha component is a flavoprotein, the beta component is a hemoprotein. The cofactor is siroheme. It depends on [4Fe-4S] cluster as a cofactor.

The catalysed reaction is hydrogen sulfide + 3 NADP(+) + 3 H2O = sulfite + 3 NADPH + 4 H(+). It functions in the pathway sulfur metabolism; hydrogen sulfide biosynthesis; hydrogen sulfide from sulfite (NADPH route): step 1/1. Its function is as follows. Component of the sulfite reductase complex that catalyzes the 6-electron reduction of sulfite to sulfide. This is one of several activities required for the biosynthesis of L-cysteine from sulfate. The polypeptide is Sulfite reductase [NADPH] hemoprotein beta-component (Shewanella loihica (strain ATCC BAA-1088 / PV-4)).